The chain runs to 290 residues: UPF0761 membrane protein YihY (290 aa).

6 helical membrane passes run Leu44–Phe64, Val104–Leu124, Phe140–Ile160, Ile183–Thr203, Ala210–Leu230, and Val244–Leu264.

Belongs to the UPF0761 family.

It localises to the cell inner membrane. In Salmonella agona (strain SL483), this protein is UPF0761 membrane protein YihY.